A 615-amino-acid chain; its full sequence is DNA mismatch repair protein MutL (615 aa).

The interval F363–Y397 is disordered. Residues A364–P391 show a composition bias toward low complexity.

This sequence belongs to the DNA mismatch repair MutL/HexB family.

Its function is as follows. This protein is involved in the repair of mismatches in DNA. It is required for dam-dependent methyl-directed DNA mismatch repair. May act as a 'molecular matchmaker', a protein that promotes the formation of a stable complex between two or more DNA-binding proteins in an ATP-dependent manner without itself being part of a final effector complex. The protein is DNA mismatch repair protein MutL of Escherichia coli (strain K12 / MC4100 / BW2952).